A 235-amino-acid polypeptide reads, in one-letter code: Orotidine 5'-phosphate decarboxylase (235 aa).

Residues Asp-10, Lys-33, 60–69, Thr-123, Arg-185, Gln-194, Gly-214, and Arg-215 each bind substrate; that span reads DLKMHDIPNT. Residue Lys-62 is the Proton donor of the active site.

It belongs to the OMP decarboxylase family. Type 1 subfamily. Homodimer.

It catalyses the reaction orotidine 5'-phosphate + H(+) = UMP + CO2. The protein operates within pyrimidine metabolism; UMP biosynthesis via de novo pathway; UMP from orotate: step 2/2. Its function is as follows. Catalyzes the decarboxylation of orotidine 5'-monophosphate (OMP) to uridine 5'-monophosphate (UMP). This is Orotidine 5'-phosphate decarboxylase from Lactobacillus acidophilus (strain ATCC 700396 / NCK56 / N2 / NCFM).